The primary structure comprises 179 residues: MASQNRDPVAASVAAARKGAEPSGGAARGPVGKRLQQELMTLMMSGDKGISAFPESDNLFKWVGTIHGAAGTVYEDLRYKLSLEFPSGYPYNAPTVKFLTPCYHPNVDTQGNICLDILKDKWSALYDVRTILLSIQSLLGEPNIDSPLNTHAAELWKNPTAFKKYLQETYSKQVSSQDP.

Positions 1-31 (MASQNRDPVAASVAAARKGAEPSGGAARGPV) are disordered. Residue Ala2 is modified to N-acetylalanine. Residue Ser3 is modified to Phosphoserine. Positions 30-175 (PVGKRLQQEL…LQETYSKQVS (146 aa)) constitute a UBC core domain. Cys114 (glycyl thioester intermediate) is an active-site residue.

This sequence belongs to the ubiquitin-conjugating enzyme family. Component of the APC/C complex, composed of at least 14 distinct subunits that assemble into a complex of at least 19 chains with a combined molecular mass of around 1.2 MDa. Within this complex, directly interacts with ANAPC2. Post-translationally, autoubiquitinated by the APC/C complex, leading to its degradation by the proteasome. Its degradation plays a central role in APC/C regulation, allowing cyclin-A accumulation before S phase entry. APC/C substrates inhibit the autoubiquitination of UBE2C/UBCH10 but not its E2 function, hence APC/C remaining active until its substrates have been destroyed.

It carries out the reaction S-ubiquitinyl-[E1 ubiquitin-activating enzyme]-L-cysteine + [E2 ubiquitin-conjugating enzyme]-L-cysteine = [E1 ubiquitin-activating enzyme]-L-cysteine + S-ubiquitinyl-[E2 ubiquitin-conjugating enzyme]-L-cysteine.. It catalyses the reaction S-ubiquitinyl-[E1 ubiquitin-activating enzyme]-L-cysteine + [acceptor protein]-L-lysine = [E1 ubiquitin-activating enzyme]-L-cysteine + N(6)-monoubiquitinyl-[acceptor protein]-L-lysine.. Its pathway is protein modification; protein ubiquitination. Accepts ubiquitin from the E1 complex and catalyzes its covalent attachment to other proteins. In vitro catalyzes 'Lys-11'- and 'Lys-48'-linked polyubiquitination. Acts as an essential factor of the anaphase promoting complex/cyclosome (APC/C), a cell cycle-regulated ubiquitin ligase that controls progression through mitosis. Acts by initiating 'Lys-11'-linked polyubiquitin chains on APC/C substrates, leading to the degradation of APC/C substrates by the proteasome and promoting mitotic exit. This Bos taurus (Bovine) protein is Ubiquitin-conjugating enzyme E2 C (UBE2C).